The following is a 423-amino-acid chain: Histidine--tRNA ligase (423 aa).

This sequence belongs to the class-II aminoacyl-tRNA synthetase family. As to quaternary structure, homodimer.

The protein resides in the cytoplasm. The catalysed reaction is tRNA(His) + L-histidine + ATP = L-histidyl-tRNA(His) + AMP + diphosphate + H(+). The polypeptide is Histidine--tRNA ligase (Orientia tsutsugamushi (strain Ikeda) (Rickettsia tsutsugamushi)).